The sequence spans 37 residues: Large ribosomal subunit protein bL36 (37 aa).

The protein belongs to the bacterial ribosomal protein bL36 family.

The polypeptide is Large ribosomal subunit protein bL36 (Desulforapulum autotrophicum (strain ATCC 43914 / DSM 3382 / VKM B-1955 / HRM2) (Desulfobacterium autotrophicum)).